A 95-amino-acid polypeptide reads, in one-letter code: Small ribosomal subunit protein uS19 (95 aa).

The disordered stretch occupies residues 76–95; that stretch reads PTRRFGGHADKKAKKGELKK. Residues 82 to 95 show a composition bias toward basic and acidic residues; that stretch reads GHADKKAKKGELKK.

It belongs to the universal ribosomal protein uS19 family.

In terms of biological role, protein S19 forms a complex with S13 that binds strongly to the 16S ribosomal RNA. This is Small ribosomal subunit protein uS19 from Thermotoga neapolitana (strain ATCC 49049 / DSM 4359 / NBRC 107923 / NS-E).